A 234-amino-acid chain; its full sequence is Pepsin inhibitor Dit33 (234 aa).

Positions 1–17 (MKILFCFVLLAIAALRA) are cleaved as a signal peptide. A disulfide bond links Cys135 and Cys230. Positions 200–222 (RHETSSQPSDATTISTTTQAPVE) are disordered. Over residues 204-219 (SSQPSDATTISTTTQA) the composition is skewed to polar residues.

It belongs to the protease inhibitor I33 family.

The protein resides in the secreted. In terms of biological role, aspartyl protease inhibitor. The chain is Pepsin inhibitor Dit33 (DIT33) from Dirofilaria immitis (Canine heartworm).